We begin with the raw amino-acid sequence, 208 residues long: Ribosomal RNA large subunit methyltransferase E (208 aa).

Gly62, Trp64, Asp82, Asp98, and Asp123 together coordinate S-adenosyl-L-methionine. The Proton acceptor role is filled by Lys163.

The protein belongs to the class I-like SAM-binding methyltransferase superfamily. RNA methyltransferase RlmE family.

Its subcellular location is the cytoplasm. The catalysed reaction is uridine(2552) in 23S rRNA + S-adenosyl-L-methionine = 2'-O-methyluridine(2552) in 23S rRNA + S-adenosyl-L-homocysteine + H(+). Its function is as follows. Specifically methylates the uridine in position 2552 of 23S rRNA at the 2'-O position of the ribose in the fully assembled 50S ribosomal subunit. This Edwardsiella ictaluri (strain 93-146) protein is Ribosomal RNA large subunit methyltransferase E.